A 503-amino-acid polypeptide reads, in one-letter code: Protein O-glucosyltransferase 3 (503 aa).

An N-terminal signal peptide occupies residues 1-19; sequence MQALPLGLQLALLVAAGAG. The stretch at 19-129 is one Filamin repeat; it reads GARVSAPRSL…VAHSPYILKG (111 aa). N-linked (GlcNAc...) asparagine glycans are attached at residues Asn-56 and Asn-302. Positions 500–503 match the Prevents secretion from ER motif; the sequence is REEL.

Belongs to the KDELC family.

It is found in the endoplasmic reticulum lumen. It catalyses the reaction L-seryl-[EGF-like domain protein] + UDP-alpha-D-glucose = 3-O-(beta-D-glucosyl)-L-seryl-[EGF-like domain protein] + UDP + H(+). The catalysed reaction is L-seryl-[EGF-like domain protein] + UDP-alpha-D-xylose = 3-O-(beta-D-xylosyl)-L-seryl-[EGF-like domain protein] + UDP + H(+). It functions in the pathway protein modification; protein glycosylation. Its function is as follows. Protein glucosyltransferase that catalyzes the transfer of glucose from UDP-glucose to a serine residue within the consensus sequence peptide C-X-N-T-X-G-S-F-X-C. Can also catalyze the transfer of xylose from UDP-xylose but less efficiently. Specifically targets extracellular EGF repeats of proteins such as NOTCH1, NOTCH3, FBN1, FBN2 and LTBP1. May regulate the transport of NOTCH1 and NOTCH3 to the plasma membrane and thereby the Notch signaling pathway. This Mus musculus (Mouse) protein is Protein O-glucosyltransferase 3 (Poglut3).